A 490-amino-acid chain; its full sequence is Glutamate--tRNA ligase (490 aa).

The 'HIGH' region signature appears at 13-23 (PSPTGTPHVGL). The 'KMSKS' region signature appears at 257 to 261 (KLSKR). Lys-260 contributes to the ATP binding site.

The protein belongs to the class-I aminoacyl-tRNA synthetase family. Glutamate--tRNA ligase type 1 subfamily. As to quaternary structure, monomer.

It localises to the cytoplasm. It catalyses the reaction tRNA(Glu) + L-glutamate + ATP = L-glutamyl-tRNA(Glu) + AMP + diphosphate. Its function is as follows. Catalyzes the attachment of glutamate to tRNA(Glu) in a two-step reaction: glutamate is first activated by ATP to form Glu-AMP and then transferred to the acceptor end of tRNA(Glu). The sequence is that of Glutamate--tRNA ligase from Mycobacterium tuberculosis (strain ATCC 25177 / H37Ra).